The following is an 88-amino-acid chain: MANTSSAKKATRKIARRAAINKNRRSRVRTYVRQVEEALASGDKAAAQAAFKAAEPELMRAATKGVIHKNTASRKVSRLAARLKVLSA.

The disordered stretch occupies residues 1 to 23 (MANTSSAKKATRKIARRAAINKN).

It belongs to the bacterial ribosomal protein bS20 family.

In terms of biological role, binds directly to 16S ribosomal RNA. The chain is Small ribosomal subunit protein bS20 from Mesorhizobium japonicum (strain LMG 29417 / CECT 9101 / MAFF 303099) (Mesorhizobium loti (strain MAFF 303099)).